We begin with the raw amino-acid sequence, 110 residues long: Auxin-responsive protein SAUR71 (110 aa).

Belongs to the ARG7 family. In terms of tissue distribution, highly expressed in the steles of roots and hypocotyls.

It localises to the cytoplasm. Its function is as follows. Plays a role in the regulation of cell expansion, root meristem patterning and auxin transport. The polypeptide is Auxin-responsive protein SAUR71 (Arabidopsis thaliana (Mouse-ear cress)).